Reading from the N-terminus, the 421-residue chain is D-amino acid dehydrogenase (421 aa).

Residue 3–17 (VIVLGSGVIGVASAY) coordinates FAD.

This sequence belongs to the DadA oxidoreductase family. Requires FAD as cofactor.

The catalysed reaction is a D-alpha-amino acid + A + H2O = a 2-oxocarboxylate + AH2 + NH4(+). The protein operates within amino-acid degradation; D-alanine degradation; NH(3) and pyruvate from D-alanine: step 1/1. In terms of biological role, oxidative deamination of D-amino acids. This chain is D-amino acid dehydrogenase, found in Acinetobacter baumannii (strain SDF).